A 55-amino-acid chain; its full sequence is Neurotoxin B-IV (55 aa).

Proline 10 is subject to Hydroxyproline. 4 cysteine pairs are disulfide-bonded: cysteine 12–cysteine 52, cysteine 16–cysteine 48, cysteine 23–cysteine 41, and cysteine 26–cysteine 37.

Belongs to the worm B-toxin family.

The protein localises to the secreted. Functionally, this toxin increases the excitability of nerves by delaying the inactivation of the voltage-gated sodium channel (Nav). Only acts on some crustacean. Is more abundant, but 15-fold less toxic than neurotoxin B-II. In Cerebratulus lacteus (Milky ribbon worm), this protein is Neurotoxin B-IV.